The primary structure comprises 476 residues: Carbamoyl phosphate synthase arginine-specific small chain (476 aa).

A mitochondrion-targeting transit peptide spans 1–24; sequence MFSHLLKPAARSAGLLGHVNRRYL. In terms of domain architecture, Glutamine amidotransferase type-1 spans 228–415; sequence HVALIDCGVK…IQNVQRYKDH (188 aa). The active-site Nucleophile is the Cys-304. Active-site residues include His-388 and Glu-390.

The protein belongs to the CarA family. As to quaternary structure, heterodimer composed of 2 chains; the small (or glutamine) chain promotes the hydrolysis of glutamine to ammonia, which is used by the large (or ammonia) chain to synthesize carbamoyl phosphate.

Its subcellular location is the mitochondrion matrix. The catalysed reaction is hydrogencarbonate + L-glutamine + 2 ATP + H2O = carbamoyl phosphate + L-glutamate + 2 ADP + phosphate + 2 H(+). It catalyses the reaction L-glutamine + H2O = L-glutamate + NH4(+). It participates in amino-acid biosynthesis; L-arginine biosynthesis; carbamoyl phosphate from bicarbonate: step 1/1. Its function is as follows. Small subunit of the arginine-specific carbamoyl phosphate synthase (CPSase). CPSase catalyzes the formation of carbamoyl phosphate from the ammonia moiety of glutamine, carbonate, and phosphate donated by ATP, the first step of the arginine biosynthetic pathway. The small subunit (glutamine amidotransferase) binds and cleaves glutamine to supply the large subunit with the substrate ammonia. The protein is Carbamoyl phosphate synthase arginine-specific small chain (CPA1) of Phaeosphaeria nodorum (strain SN15 / ATCC MYA-4574 / FGSC 10173) (Glume blotch fungus).